The following is a 421-amino-acid chain: UDP-N-acetylglucosamine 1-carboxyvinyltransferase (421 aa).

Residue 22–23 coordinates phosphoenolpyruvate; the sequence is KN. Arginine 93 lines the UDP-N-acetyl-alpha-D-glucosamine pocket. Catalysis depends on cysteine 117, which acts as the Proton donor. The residue at position 117 (cysteine 117) is a 2-(S-cysteinyl)pyruvic acid O-phosphothioketal. Residues 122-126, aspartate 308, and valine 330 contribute to the UDP-N-acetyl-alpha-D-glucosamine site; that span reads RPVDL.

Belongs to the EPSP synthase family. MurA subfamily.

It is found in the cytoplasm. It carries out the reaction phosphoenolpyruvate + UDP-N-acetyl-alpha-D-glucosamine = UDP-N-acetyl-3-O-(1-carboxyvinyl)-alpha-D-glucosamine + phosphate. It functions in the pathway cell wall biogenesis; peptidoglycan biosynthesis. In terms of biological role, cell wall formation. Adds enolpyruvyl to UDP-N-acetylglucosamine. The polypeptide is UDP-N-acetylglucosamine 1-carboxyvinyltransferase (Pseudomonas aeruginosa (strain LESB58)).